Here is a 90-residue protein sequence, read N- to C-terminus: Small ribosomal subunit protein uS15 (90 aa).

The protein belongs to the universal ribosomal protein uS15 family. In terms of assembly, part of the 30S ribosomal subunit. Forms a bridge to the 50S subunit in the 70S ribosome, contacting the 23S rRNA.

In terms of biological role, one of the primary rRNA binding proteins, it binds directly to 16S rRNA where it helps nucleate assembly of the platform of the 30S subunit by binding and bridging several RNA helices of the 16S rRNA. Its function is as follows. Forms an intersubunit bridge (bridge B4) with the 23S rRNA of the 50S subunit in the ribosome. This Helicobacter pylori (strain Shi470) protein is Small ribosomal subunit protein uS15.